The primary structure comprises 141 residues: Hemoglobin subunit alpha-A (141 aa).

One can recognise a Globin domain in the interval Val-1–Arg-141. Residue His-58 coordinates O2. A heme b-binding site is contributed by His-87.

The protein belongs to the globin family. Heterotetramer of two alpha chains and two beta chains. In terms of tissue distribution, red blood cells.

Functionally, involved in oxygen transport from the lung to the various peripheral tissues. This chain is Hemoglobin subunit alpha-A (HBAA), found in Sturnus vulgaris (Starling).